A 384-amino-acid chain; its full sequence is Transcription factor 7 (384 aa).

Over residues 1-16 the composition is skewed to gly residues; sequence MPQLDSGGGGAGGGDD. A CTNNB1-binding region spans residues 1–59; it reads MPQLDSGGGGAGGGDDLGAPDELLAFQDEGEEQDDKSRDSAAGPERDLAELKSSLVNES. 3 disordered regions span residues 1–88, 133–183, and 337–384; these read MPQL…LGRE, PPSG…QKQV, and SARD…MTVL. A compositionally biased stretch (basic and acidic residues) spans 35 to 50; the sequence is DKSRDSAAGPERDLAE. Over residues 62–78 the composition is skewed to gly residues; it reads AAGGAGIPGVPGAGAGA. Residues 269–337 constitute a DNA-binding region (HMG box); it reads IKKPLNAFML…LHMQLYPGWS (69 aa). A Nuclear localization signal motif is present at residues 344-348; sequence KKKRR. A compositionally biased stretch (basic and acidic residues) spans 352–370; it reads KHQESTTGGKRNAFGTYPE. A compositionally biased stretch (low complexity) spans 374 to 384; it reads APAPFLPMTVL.

The protein belongs to the TCF/LEF family. As to quaternary structure, binds the armadillo repeat of CTNNB1 and forms a stable complex. Interacts with TLE5, TLE1, TLE2, TLE3 and TLE4. Interacts with MLLT11. Long isoform interacts (via N-terminus) with SOX13; inhibits WNT-mediated transcriptional activity. Interacts with DAZAP2. As to expression, predominantly expressed in T-cells. Also detected in proliferating intestinal epithelial cells and in the basal epithelial cells of mammary gland epithelium.

The protein resides in the nucleus. Functionally, transcriptional activator involved in T-cell lymphocyte differentiation. Necessary for the survival of CD4(+) CD8(+) immature thymocytes. Isoforms lacking the N-terminal CTNNB1 binding domain cannot fulfill this role. Binds to the T-lymphocyte-specific enhancer element (5'-WWCAAAG-3') found in the promoter of the CD3E gene. Represses expression of the T-cell receptor gamma gene in alpha-beta T-cell lineages. Required for the development of natural killer receptor-positive lymphoid tissue inducer T-cells. TLE1, TLE2, TLE3 and TLE4 repress transactivation mediated by TCF7 and CTNNB1. May also act as feedback transcriptional repressor of CTNNB1 and TCF7L2 target genes. This is Transcription factor 7 from Homo sapiens (Human).